We begin with the raw amino-acid sequence, 371 residues long: uncharacterized protein (371 aa).

Residues 287 to 323 adopt a coiled-coil conformation; it reads EVVTALDRYRQHLRETRERLEEKQGKLLEELKGYESM.

This is an uncharacterized protein from Aspergillus fumigatus (strain ATCC MYA-4609 / CBS 101355 / FGSC A1100 / Af293) (Neosartorya fumigata).